The following is a 203-amino-acid chain: Putative GPI-anchored protein YHR214W (203 aa).

The signal sequence occupies residues 1–23 (MFNRFNKFQAAVALALLSRGALG). Residues asparagine 28 and asparagine 138 are each glycosylated (N-linked (GlcNAc...) asparagine). Residue asparagine 184 is the site of GPI-anchor amidated asparagine attachment. The propeptide at 185–203 (AGTFSLSNAILNGGSVSGL) is removed in mature form.

It is found in the cell membrane. The protein is Putative GPI-anchored protein YHR214W of Saccharomyces cerevisiae (strain ATCC 204508 / S288c) (Baker's yeast).